We begin with the raw amino-acid sequence, 89 residues long: Small ribosomal subunit protein uS15 (89 aa).

Belongs to the universal ribosomal protein uS15 family. In terms of assembly, part of the 30S ribosomal subunit. Forms a bridge to the 50S subunit in the 70S ribosome, contacting the 23S rRNA.

Its function is as follows. One of the primary rRNA binding proteins, it binds directly to 16S rRNA where it helps nucleate assembly of the platform of the 30S subunit by binding and bridging several RNA helices of the 16S rRNA. In terms of biological role, forms an intersubunit bridge (bridge B4) with the 23S rRNA of the 50S subunit in the ribosome. This chain is Small ribosomal subunit protein uS15, found in Clavibacter michiganensis subsp. michiganensis (strain NCPPB 382).